The sequence spans 318 residues: HPr kinase/phosphorylase (318 aa).

Active-site residues include H141 and K162. 156-163 (GDSAMGKS) is an ATP binding site. S163 serves as a coordination point for Mg(2+). The Proton acceptor; for phosphorylation activity. Proton donor; for dephosphorylation activity role is filled by D180. Residues 204-213 (LEVRGLGILN) are important for the catalytic mechanism of both phosphorylation and dephosphorylation. Mg(2+) is bound at residue E205. R248 is an active-site residue. The interval 269-274 (PVAAGR) is important for the catalytic mechanism of dephosphorylation.

The protein belongs to the HPrK/P family. As to quaternary structure, homohexamer. Requires Mg(2+) as cofactor.

It catalyses the reaction [HPr protein]-L-serine + ATP = [HPr protein]-O-phospho-L-serine + ADP + H(+). It carries out the reaction [HPr protein]-O-phospho-L-serine + phosphate + H(+) = [HPr protein]-L-serine + diphosphate. In terms of biological role, catalyzes the ATP- as well as the pyrophosphate-dependent phosphorylation of a specific serine residue in HPr, a phosphocarrier protein of the phosphoenolpyruvate-dependent sugar phosphotransferase system (PTS). HprK/P also catalyzes the pyrophosphate-producing, inorganic phosphate-dependent dephosphorylation (phosphorolysis) of seryl-phosphorylated HPr (P-Ser-HPr). This is HPr kinase/phosphorylase from Chromobacterium violaceum (strain ATCC 12472 / DSM 30191 / JCM 1249 / CCUG 213 / NBRC 12614 / NCIMB 9131 / NCTC 9757 / MK).